The sequence spans 307 residues: Metapyrocatechase (307 aa).

VOC domains are found at residues 7–122 and 150–269; these read RPGH…LYAD and RFDH…VFCG. Fe cation-binding residues include H153, H214, and E265.

This sequence belongs to the extradiol ring-cleavage dioxygenase family. Homotetramer. The cofactor is Fe(2+).

It catalyses the reaction catechol + O2 = (2Z,4E)-2-hydroxy-6-oxohexa-2,4-dienoate + H(+). The protein operates within aromatic compound metabolism; benzoate degradation via hydroxylation. The chain is Metapyrocatechase (dmpB) from Pseudomonas sp. (strain CF600).